We begin with the raw amino-acid sequence, 295 residues long: GTPase Era (295 aa).

One can recognise an Era-type G domain in the interval 7–176 (KTVSVCIIGR…ITSKAKIAPW (170 aa)). A G1 region spans residues 15-22 (GRPNSGKS). A GTP-binding site is contributed by 15 to 22 (GRPNSGKS). The segment at 41-45 (QTTRS) is G2. The segment at 62–65 (DTPG) is G3. GTP is bound by residues 62–66 (DTPGI) and 124–127 (NKID). Residues 124–127 (NKID) are G4. Residues 152-154 (ISA) are G5. One can recognise a KH type-2 domain in the interval 204 to 281 (LQQELPYKLT…HLFLFVKVRE (78 aa)).

Belongs to the TRAFAC class TrmE-Era-EngA-EngB-Septin-like GTPase superfamily. Era GTPase family. As to quaternary structure, monomer.

It is found in the cytoplasm. The protein resides in the cell inner membrane. Functionally, an essential GTPase that binds both GDP and GTP, with rapid nucleotide exchange. Plays a role in 16S rRNA processing and 30S ribosomal subunit biogenesis and possibly also in cell cycle regulation and energy metabolism. This Rickettsia bellii (strain OSU 85-389) protein is GTPase Era.